Reading from the N-terminus, the 252-residue chain is H-2 class II histocompatibility antigen, A-F beta chain (252 aa).

Positions 1 to 16 are cleaved as a signal peptide; that stretch reads AAVVVLMVLSSPGTEG. The tract at residues 17-109 is beta-1; the sequence is GNSERHFVSQ…VETPTSLRRL (93 aa). Residues 17-213 are Extracellular-facing; sequence GNSERHFVSQ…RAQSESARSK (197 aa). 2 disulfide bridges follow: cysteine 31-cysteine 93 and cysteine 132-cysteine 188. N-linked (GlcNAc...) asparagine glycosylation is present at asparagine 35. Residues 110–203 are beta-2; the sequence is EQPNVVISLS…SLKSPITVEW (94 aa). In terms of domain architecture, Ig-like C1-type spans 112-200; the sequence is PNVVISLSRT…EHPSLKSPIT (89 aa). The segment at 204-213 is connecting peptide; it reads RAQSESARSK. A helical membrane pass occupies residues 214 to 234; it reads MLSGIGGCVLGVIFLGLGLFI. Over 235–252 the chain is Cytoplasmic; it reads RYRSQKGPRGPPPAGLLQ.

This sequence belongs to the MHC class II family. In terms of processing, ubiquitinated in immature dendritic cells leading to down-regulation of MHC class II.

The protein resides in the membrane. The sequence is that of H-2 class II histocompatibility antigen, A-F beta chain (H2-Ab1) from Mus musculus (Mouse).